Consider the following 346-residue polypeptide: Uroporphyrinogen decarboxylase (346 aa).

Residues R23–R27, D73, Y151, S206, and H321 contribute to the substrate site.

It belongs to the uroporphyrinogen decarboxylase family. Homodimer.

It is found in the cytoplasm. It catalyses the reaction uroporphyrinogen III + 4 H(+) = coproporphyrinogen III + 4 CO2. Its pathway is porphyrin-containing compound metabolism; protoporphyrin-IX biosynthesis; coproporphyrinogen-III from 5-aminolevulinate: step 4/4. In terms of biological role, catalyzes the decarboxylation of four acetate groups of uroporphyrinogen-III to yield coproporphyrinogen-III. This is Uroporphyrinogen decarboxylase from Sulfurovum sp. (strain NBC37-1).